We begin with the raw amino-acid sequence, 288 residues long: Bifunctional protein FolD (288 aa).

Residues 166–168 (GAS) and I232 each bind NADP(+).

It belongs to the tetrahydrofolate dehydrogenase/cyclohydrolase family. Homodimer.

It carries out the reaction (6R)-5,10-methylene-5,6,7,8-tetrahydrofolate + NADP(+) = (6R)-5,10-methenyltetrahydrofolate + NADPH. The catalysed reaction is (6R)-5,10-methenyltetrahydrofolate + H2O = (6R)-10-formyltetrahydrofolate + H(+). The protein operates within one-carbon metabolism; tetrahydrofolate interconversion. Catalyzes the oxidation of 5,10-methylenetetrahydrofolate to 5,10-methenyltetrahydrofolate and then the hydrolysis of 5,10-methenyltetrahydrofolate to 10-formyltetrahydrofolate. This Cronobacter sakazakii (strain ATCC BAA-894) (Enterobacter sakazakii) protein is Bifunctional protein FolD.